A 250-amino-acid polypeptide reads, in one-letter code: 1-(5-phosphoribosyl)-5-[(5-phosphoribosylamino)methylideneamino] imidazole-4-carboxamide isomerase (250 aa).

Asp8 (proton acceptor) is an active-site residue. Asp131 (proton donor) is an active-site residue.

The protein belongs to the HisA/HisF family.

It is found in the cytoplasm. The catalysed reaction is 1-(5-phospho-beta-D-ribosyl)-5-[(5-phospho-beta-D-ribosylamino)methylideneamino]imidazole-4-carboxamide = 5-[(5-phospho-1-deoxy-D-ribulos-1-ylimino)methylamino]-1-(5-phospho-beta-D-ribosyl)imidazole-4-carboxamide. Its pathway is amino-acid biosynthesis; L-histidine biosynthesis; L-histidine from 5-phospho-alpha-D-ribose 1-diphosphate: step 4/9. This chain is 1-(5-phosphoribosyl)-5-[(5-phosphoribosylamino)methylideneamino] imidazole-4-carboxamide isomerase, found in Paraburkholderia phytofirmans (strain DSM 17436 / LMG 22146 / PsJN) (Burkholderia phytofirmans).